A 186-amino-acid chain; its full sequence is dITP/XTP pyrophosphatase (186 aa).

7–12 lines the substrate pocket; the sequence is TSNPGK. Mg(2+) is bound by residues glutamate 36 and aspartate 65. Residue aspartate 65 is the Proton acceptor of the active site. Residues serine 66, 140–143, lysine 163, and 168–169 contribute to the substrate site; these read FGYD and HR.

The protein belongs to the HAM1 NTPase family. In terms of assembly, homodimer. It depends on Mg(2+) as a cofactor. Mn(2+) serves as cofactor.

The catalysed reaction is XTP + H2O = XMP + diphosphate + H(+). It catalyses the reaction dITP + H2O = dIMP + diphosphate + H(+). The enzyme catalyses ITP + H2O = IMP + diphosphate + H(+). In terms of biological role, pyrophosphatase that catalyzes the hydrolysis of nucleoside triphosphates to their monophosphate derivatives, with a high preference for the non-canonical purine nucleotides XTP (xanthosine triphosphate), dITP (deoxyinosine triphosphate) and ITP. Seems to function as a house-cleaning enzyme that removes non-canonical purine nucleotides from the nucleotide pool, thus preventing their incorporation into DNA/RNA and avoiding chromosomal lesions. This is dITP/XTP pyrophosphatase from Pyrococcus horikoshii (strain ATCC 700860 / DSM 12428 / JCM 9974 / NBRC 100139 / OT-3).